The chain runs to 346 residues: Hydroxyproline O-galactosyltransferase HPGT3 (346 aa).

Residues 1–10 (MESLPTTVPS) show a composition bias toward polar residues. Residues 1 to 21 (MESLPTTVPSKSERRARSSKF) form a disordered region. Over 1–28 (MESLPTTVPSKSERRARSSKFSQSSSKP) the chain is Cytoplasmic. A helical; Signal-anchor for type II membrane protein membrane pass occupies residues 29-45 (SVIMAFFSCVAWLYVAG). Residues 46 to 346 (RLWQDAENRV…IRQDKVCSVA (301 aa)) lie on the Lumenal side of the membrane.

Belongs to the glycosyltransferase 31 family. Requires Mn(2+) as cofactor. As to expression, expressed in roots, rosette leaves, cauline leaves, stems, flowers and siliques.

Its subcellular location is the golgi apparatus membrane. It participates in protein modification; protein glycosylation. Its function is as follows. Possesses hydroxyproline O-galactosyltransferase activity. Transfers galactose from UDP-galactose to hydroxyproline residues in the arabinogalactan proteins (AGPs). Is specific for AGPs containing non-contiguous peptidyl hydroxyproline residues. The addition of galactose onto the peptidyl hydroxyproline residues in AGP core proteins represents the first committed step in arabinogalactan polysaccharide addition. AGP glycans play essential roles in both vegetative and reproductive plant growth. This is Hydroxyproline O-galactosyltransferase HPGT3 from Arabidopsis thaliana (Mouse-ear cress).